The following is a 92-amino-acid chain: Cell division topological specificity factor (92 aa).

It belongs to the MinE family.

Prevents the cell division inhibition by proteins MinC and MinD at internal division sites while permitting inhibition at polar sites. This ensures cell division at the proper site by restricting the formation of a division septum at the midpoint of the long axis of the cell. The sequence is that of Cell division topological specificity factor from Gluconobacter oxydans (strain 621H) (Gluconobacter suboxydans).